Here is a 457-residue protein sequence, read N- to C-terminus: MTKKVYVKTFGCQMNEYDSDKMVDVLNAAEGLEKTDTPEDADIILFNTCSVREKAQEKVFSDLGRVRELKEAKPGLLIGVGGCVASQEGASIVSRAPYVDLVFGPQTLHRLPQMIDARRASGRAQVDITFPEIEKFDHLPPARVEGPSAFVSIMEGCSKYCSYCVVPYTRGDEVSRPLDDVLTEVAGLADQGVREVTLLGQNVNAYRGALTAGSTDIADFATLIEYVADIPGIERIRYTTSHPKEFTQRLIDTYAKVPKLVSHLHLPVQHGSDRILMAMKRGYTVLEYKSVIRKLRAIRPDLSLSTDMIVGFPGETEDDFDKMMALVHEMGYDTSFSFIYSPRPGTPAANLADDTPREVKLKRLQHLQATIEENVARISQSMVGKVERILVEGPSRKDPNELAGRTENNRVVNFPAPLASHPRLIGQMIDVKINHAYPHSLRGELVLVSDDASTATH.

Positions 3-120 constitute an MTTase N-terminal domain; the sequence is KKVYVKTFGC…LPQMIDARRA (118 aa). [4Fe-4S] cluster-binding residues include C12, C49, C83, C157, C161, and C164. The Radical SAM core domain maps to 143-377; sequence RVEGPSAFVS…QATIEENVAR (235 aa). Residues 380-447 enclose the TRAM domain; it reads QSMVGKVERI…PHSLRGELVL (68 aa).

The protein belongs to the methylthiotransferase family. MiaB subfamily. As to quaternary structure, monomer. Requires [4Fe-4S] cluster as cofactor.

The protein resides in the cytoplasm. It carries out the reaction N(6)-dimethylallyladenosine(37) in tRNA + (sulfur carrier)-SH + AH2 + 2 S-adenosyl-L-methionine = 2-methylsulfanyl-N(6)-dimethylallyladenosine(37) in tRNA + (sulfur carrier)-H + 5'-deoxyadenosine + L-methionine + A + S-adenosyl-L-homocysteine + 2 H(+). Functionally, catalyzes the methylthiolation of N6-(dimethylallyl)adenosine (i(6)A), leading to the formation of 2-methylthio-N6-(dimethylallyl)adenosine (ms(2)i(6)A) at position 37 in tRNAs that read codons beginning with uridine. This is tRNA-2-methylthio-N(6)-dimethylallyladenosine synthase from Burkholderia cenocepacia (strain HI2424).